The following is a 616-amino-acid chain: tRNA 5-methylaminomethyl-2-thiouridine biosynthesis bifunctional protein MnmC (616 aa).

The tract at residues 1 to 232 (MLRTIVPARL…KRHCMSARFA (232 aa)) is tRNA (mnm(5)s(2)U34)-methyltransferase. Residues 249–616 (IGGGVAGAAA…ARFAGNRKTA (368 aa)) are FAD-dependent cmnm(5)s(2)U34 oxidoreductase.

It in the N-terminal section; belongs to the methyltransferase superfamily. tRNA (mnm(5)s(2)U34)-methyltransferase family. In the C-terminal section; belongs to the DAO family. FAD serves as cofactor.

It is found in the cytoplasm. It catalyses the reaction 5-aminomethyl-2-thiouridine(34) in tRNA + S-adenosyl-L-methionine = 5-methylaminomethyl-2-thiouridine(34) in tRNA + S-adenosyl-L-homocysteine + H(+). Its function is as follows. Catalyzes the last two steps in the biosynthesis of 5-methylaminomethyl-2-thiouridine (mnm(5)s(2)U) at the wobble position (U34) in tRNA. Catalyzes the FAD-dependent demodification of cmnm(5)s(2)U34 to nm(5)s(2)U34, followed by the transfer of a methyl group from S-adenosyl-L-methionine to nm(5)s(2)U34, to form mnm(5)s(2)U34. The protein is tRNA 5-methylaminomethyl-2-thiouridine biosynthesis bifunctional protein MnmC of Thiobacillus denitrificans (strain ATCC 25259 / T1).